The sequence spans 73 residues: Cytoplasmic envelopment protein 3 (73 aa).

Gly-2 carries the N-myristoyl glycine; by host lipid modification.

This sequence belongs to the herpesviridae cytoplasmic envelopment protein 3 family. In terms of assembly, interacts with cytoplasmic envelopment protein 2; this interaction is essential for the proper localization of each protein to the assembly complex and thus for the production of infectious virus. Post-translationally, myristoylation and palmitoylation (probably on one or more of the nearby cysteines at the N-terminus) enable membrane-binding and Golgi apparatus-specific targeting and are essential for efficient packaging. In terms of processing, phosphorylated. Phosphorylation does not seem to be required for recycling to the host Golgi apparatus. Packaging is selective for underphosphorylated forms.

The protein localises to the virion tegument. Its subcellular location is the virion membrane. The protein resides in the host cell membrane. It is found in the host Golgi apparatus membrane. In terms of biological role, plays an important role in the cytoplasmic envelopment of tegument proteins and capsids during the assembly and egress processes. Also participates in viral entry at the fusion step probably by regulating the core fusion machinery. This is Cytoplasmic envelopment protein 3 (U71) from Homo sapiens (Human).